The chain runs to 87 residues: Acyl-CoA-binding protein (87 aa).

S2 carries the N-acetylserine modification. One can recognise an ACB domain in the interval 2–87; it reads SQAEFDKAAE…VEELKKKYGI (86 aa). K8 carries the post-translational modification N6-acetyllysine; alternate. At K8 the chain carries N6-succinyllysine; alternate. K14 serves as a coordination point for an acyl-CoA. An N6-succinyllysine modification is found at K17. K19 carries the post-translational modification N6-acetyllysine. At Y29 the chain carries Phosphotyrosine. Residues 29 to 33, K51, K55, and Y74 each bind an acyl-CoA; that span reads YSHYK. K51 is modified (N6-acetyllysine). K55 carries the N6-acetyllysine; alternate modification. Position 55 is an N6-succinyllysine; alternate (K55). K55 bears the N6-(2-hydroxyisobutyryl)lysine; alternate mark. K55 bears the N6-malonyllysine; alternate mark. K77 carries the N6-acetyllysine; alternate modification. K77 is modified (N6-succinyllysine; alternate).

The protein belongs to the ACBP family. As to quaternary structure, monomer.

It is found in the endoplasmic reticulum. The protein localises to the golgi apparatus. Binds medium- and long-chain acyl-CoA esters with very high affinity and may function as an intracellular carrier of acyl-CoA esters. This is Acyl-CoA-binding protein (DBI) from Chaetophractus villosus (South American armadillo).